Here is a 471-residue protein sequence, read N- to C-terminus: ATP synthase subunit beta (471 aa).

156–163 (GGAGVGKT) is a binding site for ATP.

Belongs to the ATPase alpha/beta chains family. In terms of assembly, F-type ATPases have 2 components, CF(1) - the catalytic core - and CF(0) - the membrane proton channel. CF(1) has five subunits: alpha(3), beta(3), gamma(1), delta(1), epsilon(1). CF(0) has three main subunits: a(1), b(2) and c(9-12). The alpha and beta chains form an alternating ring which encloses part of the gamma chain. CF(1) is attached to CF(0) by a central stalk formed by the gamma and epsilon chains, while a peripheral stalk is formed by the delta and b chains.

It localises to the cell membrane. It catalyses the reaction ATP + H2O + 4 H(+)(in) = ADP + phosphate + 5 H(+)(out). Functionally, produces ATP from ADP in the presence of a proton gradient across the membrane. The catalytic sites are hosted primarily by the beta subunits. This is ATP synthase subunit beta from Lysinibacillus sphaericus (strain C3-41).